We begin with the raw amino-acid sequence, 394 residues long: Queuine tRNA-ribosyltransferase (394 aa).

Asp-95 serves as the catalytic Proton acceptor. Substrate contacts are provided by residues 95–99, Asp-149, Gln-190, and Gly-217; that span reads DSGGF. Positions 248–254 are RNA binding; that stretch reads GVGTPID. Asp-267 acts as the Nucleophile in catalysis. The interval 272 to 276 is RNA binding; important for wobble base 34 recognition; the sequence is TRNAR. Cys-305, Cys-307, Cys-310, and His-337 together coordinate Zn(2+). A disordered region spans residues 375–394; it reads NDANETVGATESTESTESTE.

It belongs to the queuine tRNA-ribosyltransferase family. As to quaternary structure, homodimer. Within each dimer, one monomer is responsible for RNA recognition and catalysis, while the other monomer binds to the replacement base PreQ1. The cofactor is Zn(2+).

The catalysed reaction is 7-aminomethyl-7-carbaguanine + guanosine(34) in tRNA = 7-aminomethyl-7-carbaguanosine(34) in tRNA + guanine. Its pathway is tRNA modification; tRNA-queuosine biosynthesis. Its function is as follows. Catalyzes the base-exchange of a guanine (G) residue with the queuine precursor 7-aminomethyl-7-deazaguanine (PreQ1) at position 34 (anticodon wobble position) in tRNAs with GU(N) anticodons (tRNA-Asp, -Asn, -His and -Tyr). Catalysis occurs through a double-displacement mechanism. The nucleophile active site attacks the C1' of nucleotide 34 to detach the guanine base from the RNA, forming a covalent enzyme-RNA intermediate. The proton acceptor active site deprotonates the incoming PreQ1, allowing a nucleophilic attack on the C1' of the ribose to form the product. After dissociation, two additional enzymatic reactions on the tRNA convert PreQ1 to queuine (Q), resulting in the hypermodified nucleoside queuosine (7-(((4,5-cis-dihydroxy-2-cyclopenten-1-yl)amino)methyl)-7-deazaguanosine). This chain is Queuine tRNA-ribosyltransferase, found in Sorangium cellulosum (strain So ce56) (Polyangium cellulosum (strain So ce56)).